A 276-amino-acid polypeptide reads, in one-letter code: 2-dehydro-3-deoxyphosphooctonate aldolase (276 aa).

This sequence belongs to the KdsA family.

It localises to the cytoplasm. The enzyme catalyses D-arabinose 5-phosphate + phosphoenolpyruvate + H2O = 3-deoxy-alpha-D-manno-2-octulosonate-8-phosphate + phosphate. It participates in carbohydrate biosynthesis; 3-deoxy-D-manno-octulosonate biosynthesis; 3-deoxy-D-manno-octulosonate from D-ribulose 5-phosphate: step 2/3. The protein operates within bacterial outer membrane biogenesis; lipopolysaccharide biosynthesis. The polypeptide is 2-dehydro-3-deoxyphosphooctonate aldolase (Stenotrophomonas maltophilia (strain R551-3)).